A 142-amino-acid polypeptide reads, in one-letter code: MAKKVQAYVKLQVAAGMANPSPPVGPALGQQGVNIMEFCKAFNARTESLEKGLPIPVVITVYADRSFTFITKTPPAAVLLKKAAGIKSGSGKPNKDKVGKVTLEQVRQIAETKAADMTGSSIETKMKSIAGTARSMGLVVEE.

The protein belongs to the universal ribosomal protein uL11 family. In terms of assembly, part of the ribosomal stalk of the 50S ribosomal subunit. Interacts with L10 and the large rRNA to form the base of the stalk. L10 forms an elongated spine to which L12 dimers bind in a sequential fashion forming a multimeric L10(L12)X complex. One or more lysine residues are methylated.

Forms part of the ribosomal stalk which helps the ribosome interact with GTP-bound translation factors. The chain is Large ribosomal subunit protein uL11 from Pasteurella multocida (strain Pm70).